A 679-amino-acid chain; its full sequence is Leucine-rich repeat, immunoglobulin-like domain and transmembrane domain-containing protein 3 (679 aa).

An N-terminal signal peptide occupies residues 1-19 (MHLFACLCIVLSFLEGVGC). Topologically, residues 20-582 (LCPSQCTCDY…RVEGDDSQWS (563 aa)) are lumenal. LRR repeat units lie at residues 56–79 (PVDT…AFYY), 80–103 (LVEL…SFYN), 104–128 (LKQL…LLDM), 129–151 (PLLR…ALRY), and 152–175 (LKNL…FLES). The 53-residue stretch at 201–253 (NPWFCDCHISKMIELSKVVDPAIVLLDPLMTCSEPERLTGILFQRAELEHCLK) folds into the LRRCT domain. The Ig-like domain occupies 254-344 (PSVMTSATKI…GMSEAVVTVT (91 aa)). The cysteines at positions 275 and 328 are disulfide-linked. A glycan (N-linked (GlcNAc...) asparagine) is linked at Asn296. Residues 351–375 (TPIPPDTSERTGDHPEWDVQPGSGR) form a disordered region. Basic and acidic residues predominate over residues 357 to 367 (TSERTGDHPEW). Residues 486 to 574 (AIENLRVVSE…QCITFSTERV (89 aa)) form the Fibronectin type-III domain. Residues 583 to 603 (LLLVVTSTACVVILPLICFLL) traverse the membrane as a helical segment. Over 604–679 (YKVCKLQCKS…SEGSRPEYYC (76 aa)) the chain is Cytoplasmic.

Post-translationally, glycosylated. Detected in the outer plexiform layer (OPL) of the retina where it localizes to ON-bipolar cells (at protein level).

It is found in the cell projection. The protein resides in the dendrite. It localises to the perikaryon. The protein localises to the endoplasmic reticulum membrane. Its function is as follows. Plays a role in the synapse formation and synaptic transmission between cone photoreceptor cells and retinal bipolar cells. Required for normal transmission of a light-evoked stimulus from the cone photoreceptor cells to the ON-bipolar cells and ON-ganglion cells in the inner retina. Required in retinal ON-bipolar cells for normal localization of the cation channel TRPM1 at dendrite tips. Seems to play a specific role in synaptic contacts made by ON-bipolar cells with cone photoreceptor pedicles. May also have a role in cone synapse formation. Might facilitate FGFR1 exit from the endoplasmic reticulum to the Golgi. Could be a regulator of the FGFRs. The protein is Leucine-rich repeat, immunoglobulin-like domain and transmembrane domain-containing protein 3 (LRIT3) of Homo sapiens (Human).